The primary structure comprises 738 residues: Putative cyclic nucleotide-gated ion channel 7 (738 aa).

Over 1–104 (MYKSQYISGQ…DKTLLVWNRL (104 aa)) the chain is Cytoplasmic. A helical membrane pass occupies residues 105–125 (FVISCILAVSVDPLFFYLPIV). The Extracellular segment spans residues 126-139 (DNSGSSCIGIDTKL). Residues 140–160 (AVTTTTLRTIVDVFYLTRMAL) traverse the membrane as a helical segment. Over 161-193 (QFRTAYIAPSSRVFGRGELVIDPAKIAERYLTR) the chain is Cytoplasmic. The chain crosses the membrane as a helical span at residues 194–214 (YFVVDFLAVLPLPQIAVWKFL). At 215–227 (HGSKGSDVLPTKT) the chain is on the extracellular side. A helical transmembrane segment spans residues 228–248 (ALLNIVIVQYIPRFVRFIPLT). Topologically, residues 249-268 (SELKKTAGAFAEGAWAGAAY) are cytoplasmic. A helical transmembrane segment spans residues 269–289 (YLLWYMLASHITGAFWYMLSV). Residues 290-395 (ERNDTCWRFA…GQGLQTSTFP (106 aa)) lie on the Extracellular side of the membrane. The helical transmembrane segment at 396-416 (GEVLFSIAIAIAGLLLFALLI) threads the bilayer. At 417 to 738 (GNMQTYLQSL…KPPEPDFDAE (322 aa)) the chain is on the cytoplasmic side. Residues 502-632 (LFAN…TFRF) and glutamate 573 contribute to the a nucleoside 3',5'-cyclic phosphate site. Positions 618–633 (FRRLHSRQVQQTFRFY) are calmodulin-binding. The IQ domain maps to 638 to 667 (RTWASCFIQAAWRRYSRRKNAELRRIEEKE). Disordered regions lie at residues 671-693 (GYED…SESS) and 715-738 (LRSS…FDAE).

The protein belongs to the cyclic nucleotide-gated cation channel (TC 1.A.1.5) family. Homotetramer or heterotetramer.

Its subcellular location is the cell membrane. Putative cyclic nucleotide-gated ion channel. The protein is Putative cyclic nucleotide-gated ion channel 7 (CNGC7) of Arabidopsis thaliana (Mouse-ear cress).